Consider the following 481-residue polypeptide: MAEKITLRETDYSQWYIDLVRSAKLADYSDVRGCMIIRPNGYAIWEKMQAALDAMFKATGHVNAYFPLFIPESFIKKEAEHIEGFAPECAVVTHGGGEQLAENLYVRPTSETIIWSSYKKWIQSYRDLPILINQWANVVRWEMRTRLFLRTTEFLWQEGHTAHATSTEAQEEVMRMINVYKTFAEEYMALPVIMGRKTESEKFAGAVETWCIEAMMQDKKALQAGTSHNLGQNFAKAFDCRFQSKEGALEYVWATSWGVSTRLIGALIMAHSDDRGLVLPPKLATRQVVIIPILKGDISAVIEKARSIAAELNQKGIAAFVDDSDQNSPGWKFAEYELQGIPVRLELGPRDIQSSTCIAARRDTGEKSKLQLDSSLADQINSLLESIQTNLFNRALSFREKHTLEVSSYSEFKANIDNGFLVAHWDGTDETEAKIKEETKATIRVMPADPEMVLRYGMDQPGTCIYSGKPSTRKVIFAKAY.

Belongs to the class-II aminoacyl-tRNA synthetase family. ProS type 3 subfamily. Homodimer.

The protein localises to the cytoplasm. It catalyses the reaction tRNA(Pro) + L-proline + ATP = L-prolyl-tRNA(Pro) + AMP + diphosphate. Catalyzes the attachment of proline to tRNA(Pro) in a two-step reaction: proline is first activated by ATP to form Pro-AMP and then transferred to the acceptor end of tRNA(Pro). The sequence is that of Proline--tRNA ligase from Prosthecochloris aestuarii (strain DSM 271 / SK 413).